The chain runs to 137 residues: Small ribosomal subunit protein uS12 (137 aa).

The residue at position 102 (Asp-102) is a 3-methylthioaspartic acid.

It belongs to the universal ribosomal protein uS12 family. As to quaternary structure, part of the 30S ribosomal subunit. Contacts proteins S8 and S17. May interact with IF1 in the 30S initiation complex.

Its function is as follows. With S4 and S5 plays an important role in translational accuracy. Interacts with and stabilizes bases of the 16S rRNA that are involved in tRNA selection in the A site and with the mRNA backbone. Located at the interface of the 30S and 50S subunits, it traverses the body of the 30S subunit contacting proteins on the other side and probably holding the rRNA structure together. The combined cluster of proteins S8, S12 and S17 appears to hold together the shoulder and platform of the 30S subunit. This is Small ribosomal subunit protein uS12 from Phytoplasma mali (strain AT).